A 348-amino-acid chain; its full sequence is Zinc finger protein 843 (348 aa).

A C2H2-type 1 zinc finger spans residues 33-55; it reads CKCKACGRGFTQSASLLQHWRVH. The C2H2-type 2; degenerate zinc-finger motif lies at 145-167; that stretch reads FCCCSCGDSVNEKTSLSQRVLPH. The segment covering 184–195 has biased composition (polar residues); sequence APSSVAPDSTSG. Disordered regions lie at residues 184–203 and 256–329; these read APSS…GSPG and ATQP…WRGA.

This chain is Zinc finger protein 843 (ZNF843), found in Homo sapiens (Human).